The primary structure comprises 723 residues: Homeobox protein vnd (723 aa).

Disordered stretches follow at residues 1–115 (MTTS…GLAP), 224–307 (AHHG…HHHP), 465–549 (GSSG…RKRR), and 703–723 (HAHAHGHGHPHAHAQRAAWWP). The segment covering 10 to 22 (TPSKRDRDRERDN) has biased composition (basic and acidic residues). Positions 23-36 (SSGLGSAGSLPASP) are enriched in low complexity. Residues 37–48 (QSAITVSPSSPA) show a composition bias toward polar residues. The span at 61-92 (LERKREREDREDREDRKERQERHERDRDHERF) shows a compositional bias: basic and acidic residues. A compositionally biased stretch (low complexity) spans 97-111 (STASTTVPTNTSSSS). Over residues 226–235 (HGSDLSHHSA) the composition is skewed to basic and acidic residues. Polar residues predominate over residues 237-255 (ESTSGHRGQGSHTSPSALS). Residues 278 to 289 (EADHHSTTEHHA) are compositionally biased toward basic and acidic residues. Basic residues predominate over residues 298 to 307 (HPHHQQHHHP). Low complexity predominate over residues 483–493 (NNNNNTTNNNN). The segment covering 512–528 (LNEDGIEEDIDDVDDAD) has biased composition (acidic residues). Positions 545–604 (KRKRRVLFTKAQTYELERRFRQQRYLSAPEREHLASLIRLTPTQVKIWFQNHRYKTKRAQ) form a DNA-binding region, homeobox. Over residues 703–716 (HAHAHGHGHPHAHA) the composition is skewed to basic residues.

The protein belongs to the NK-2 homeobox family. Expressed in the CNS and midgut.

Its subcellular location is the nucleus. Probable transcriptional regulator involved in the regulation of the proneural AS-C genes and the neurogenic genes of the enhancer of split complex. Could specifically activate proneural genes in the ventral-most neuroectoderm. The chain is Homeobox protein vnd (vnd) from Drosophila melanogaster (Fruit fly).